The chain runs to 554 residues: MFCIQCEQTIRTPAGNGCSYTQGMCGKSSDTSDLQDLLIYILQGVSSYAALAREVGIIDHEIDTFVPKAFFATLTNVNFDDERIIAYTTQAETFRNRLKAAYEAKCSELNIDAKPMNAPMQLVLGASKPEMLSQALQAVPNRGKDEVHEDIMGLRLLCLYGLKGAAAYMEHARVLDQTSDEVAGEFHEIMAFLGEDSVDADKLFNTAMQIGQLNYRVMAMLDEGETHAFGHPEPTQVNTKSVKGKAILVSGHDMKDLELILEQTQGKGINVYTHGEMLPALAYPELKKYPHLVGNYGSAWQNQQKEFATFPGAVVMTSNCIIDPNVGDYSNRIFTRSIVGWPGVTHIIGDDFSEVIAKAESLEGFIYDEIPHLITIGFARNALMAAAPTVIENVKSGAIKHFFLVGGCDGDKQERGYFTDIATQAPADSVILTLGCGKYKFNKLEFGDINGIPRLLDIGQCNDAYSAIQLAIALSEAFECDINELPLTLVLSWFEQKAIVVLLTLLSLGVKNIMTGPTAPAFLTPNLAKVLEEKFGLRNTTTVEADLNRVLNVA.

The [2Fe-2S] cluster site is built by Cys-3, Cys-6, Cys-18, and Cys-25. Residues His-252, Glu-276, Cys-320, Cys-408, Cys-436, Cys-461, Glu-495, and Lys-497 each contribute to the hybrid [4Fe-2O-2S] cluster site. Cys-408 carries the cysteine persulfide modification.

This sequence belongs to the HCP family. [2Fe-2S] cluster is required as a cofactor. Hybrid [4Fe-2O-2S] cluster serves as cofactor.

The protein localises to the cytoplasm. It catalyses the reaction A + NH4(+) + H2O = hydroxylamine + AH2 + H(+). Its function is as follows. Catalyzes the reduction of hydroxylamine to form NH(3) and H(2)O. The polypeptide is Hydroxylamine reductase (Shewanella pealeana (strain ATCC 700345 / ANG-SQ1)).